Reading from the N-terminus, the 341-residue chain is UDP-3-O-acylglucosamine N-acyltransferase (341 aa).

His241 serves as the catalytic Proton acceptor.

This sequence belongs to the transferase hexapeptide repeat family. LpxD subfamily. As to quaternary structure, homotrimer.

It catalyses the reaction a UDP-3-O-[(3R)-3-hydroxyacyl]-alpha-D-glucosamine + a (3R)-hydroxyacyl-[ACP] = a UDP-2-N,3-O-bis[(3R)-3-hydroxyacyl]-alpha-D-glucosamine + holo-[ACP] + H(+). Its pathway is bacterial outer membrane biogenesis; LPS lipid A biosynthesis. Functionally, catalyzes the N-acylation of UDP-3-O-acylglucosamine using 3-hydroxyacyl-ACP as the acyl donor. Is involved in the biosynthesis of lipid A, a phosphorylated glycolipid that anchors the lipopolysaccharide to the outer membrane of the cell. This chain is UDP-3-O-acylglucosamine N-acyltransferase, found in Christiangramia forsetii (strain DSM 17595 / CGMCC 1.15422 / KT0803) (Gramella forsetii).